Consider the following 382-residue polypeptide: Farnesyl diphosphate synthase (382 aa).

Positions 81, 84, and 120 each coordinate isopentenyl diphosphate. 2 residues coordinate Mg(2+): aspartate 127 and aspartate 131. Arginine 136 serves as a coordination point for dimethylallyl diphosphate. Arginine 137 provides a ligand contact to isopentenyl diphosphate. Positions 230, 231, 270, 287, and 296 each coordinate dimethylallyl diphosphate.

Belongs to the FPP/GGPP synthase family. The cofactor is Mg(2+).

The protein localises to the cytoplasm. The catalysed reaction is isopentenyl diphosphate + dimethylallyl diphosphate = (2E)-geranyl diphosphate + diphosphate. It carries out the reaction isopentenyl diphosphate + (2E)-geranyl diphosphate = (2E,6E)-farnesyl diphosphate + diphosphate. It functions in the pathway isoprenoid biosynthesis; farnesyl diphosphate biosynthesis; farnesyl diphosphate from geranyl diphosphate and isopentenyl diphosphate: step 1/1. Its pathway is isoprenoid biosynthesis; geranyl diphosphate biosynthesis; geranyl diphosphate from dimethylallyl diphosphate and isopentenyl diphosphate: step 1/1. With respect to regulation, inhibited by aminobisphosphonate drugs (aBP), such as risedronate and alendronate. Its function is as follows. Key enzyme in isoprenoid biosynthesis which catalyzes the formation of farnesyl diphosphate (FPP), a sterol precursor. Involved in the inhibition of cell growth. The polypeptide is Farnesyl diphosphate synthase (fps) (Dictyostelium discoideum (Social amoeba)).